A 162-amino-acid chain; its full sequence is Proepiregulin (162 aa).

A signal peptide spans 1–22 (METLPASWVLTLLCLGSHLLQA). Residues 23–55 (VISTTVIPSCIPGESEDNCTALVQMEDDPRVAQ) constitute a propeptide that is removed on maturation. The N-linked (GlcNAc...) asparagine glycan is linked to Asn40. Topologically, residues 53-112 (VAQVQITKCSSDMDGYCLHGQCIYLVDMREKFCRCEVGYTGLRCEHFFLTVHQPLSKEYV) are extracellular. One can recognise an EGF-like domain in the interval 57–97 (QITKCSSDMDGYCLHGQCIYLVDMREKFCRCEVGYTGLRCE). 3 disulfide bridges follow: Cys61/Cys74, Cys69/Cys85, and Cys87/Cys96. Positions 102–162 (TVHQPLSKEY…TSGDPVLPQV (61 aa)) are cleaved as a propeptide — removed in mature form. A helical membrane pass occupies residues 113 to 133 (ALTVILIFLFLIITAGCIYYF). Residues 134 to 162 (CRWYKNRKSKKSREEYERVTSGDPVLPQV) lie on the Cytoplasmic side of the membrane.

As to quaternary structure, interacts with EGFR and ERBB4.

It is found in the secreted. The protein localises to the extracellular space. The protein resides in the cell membrane. Functionally, ligand of the EGF receptor/EGFR and ERBB4. Stimulates EGFR and ERBB4 tyrosine phosphorylation. Contributes to inflammation, wound healing, tissue repair, and oocyte maturation by regulating angiogenesis and vascular remodeling and by stimulating cell proliferation. This is Proepiregulin (Ereg) from Mus musculus (Mouse).